Here is a 240-residue protein sequence, read N- to C-terminus: Probable xyloglucan-specific endo-beta-1,4-glucanase A (240 aa).

The N-terminal stretch at 1 to 15 is a signal peptide; sequence MKFLTPLVLSSLASA.

It belongs to the glycosyl hydrolase 12 (cellulase H) family.

It is found in the secreted. It carries out the reaction xyloglucan + H2O = xyloglucan oligosaccharides.. Its function is as follows. Catalyzes endohydrolysis of 1,4-beta-D-glucosidic linkages in xyloglucan with retention of the beta-configuration of the glycosyl residues. Specific for xyloglucan and does not hydrolyze other cell wall components. In Aspergillus oryzae (strain ATCC 42149 / RIB 40) (Yellow koji mold), this protein is Probable xyloglucan-specific endo-beta-1,4-glucanase A (xgeA).